We begin with the raw amino-acid sequence, 483 residues long: ATP synthase subunit beta (483 aa).

162–169 (GGAGVGKT) is an ATP binding site.

It belongs to the ATPase alpha/beta chains family. In terms of assembly, F-type ATPases have 2 components, CF(1) - the catalytic core - and CF(0) - the membrane proton channel. CF(1) has five subunits: alpha(3), beta(3), gamma(1), delta(1), epsilon(1). CF(0) has four main subunits: a(1), b(1), b'(1) and c(9-12).

It localises to the cellular thylakoid membrane. The enzyme catalyses ATP + H2O + 4 H(+)(in) = ADP + phosphate + 5 H(+)(out). Its function is as follows. Produces ATP from ADP in the presence of a proton gradient across the membrane. The catalytic sites are hosted primarily by the beta subunits. The protein is ATP synthase subunit beta of Prochloron didemni.